We begin with the raw amino-acid sequence, 503 residues long: Cytochrome P450 3A13 (503 aa).

Position 442 (Cys-442) interacts with heme.

Belongs to the cytochrome P450 family. Heme is required as a cofactor.

The protein localises to the endoplasmic reticulum membrane. It localises to the microsome membrane. The enzyme catalyses an organic molecule + reduced [NADPH--hemoprotein reductase] + O2 = an alcohol + oxidized [NADPH--hemoprotein reductase] + H2O + H(+). Functionally, can activate aflatoxin B1 to a genotoxic product. The protein is Cytochrome P450 3A13 (Cyp3a13) of Mus musculus (Mouse).